The primary structure comprises 206 residues: Orotate phosphoribosyltransferase (206 aa).

5-phospho-alpha-D-ribose 1-diphosphate contacts are provided by residues arginine 93, lysine 97, histidine 99, and 119–127 (EDLISTGGT). Orotate is bound at residue serine 123.

The protein belongs to the purine/pyrimidine phosphoribosyltransferase family. PyrE subfamily. Homodimer. It depends on Mg(2+) as a cofactor.

The enzyme catalyses orotidine 5'-phosphate + diphosphate = orotate + 5-phospho-alpha-D-ribose 1-diphosphate. The protein operates within pyrimidine metabolism; UMP biosynthesis via de novo pathway; UMP from orotate: step 1/2. Its function is as follows. Catalyzes the transfer of a ribosyl phosphate group from 5-phosphoribose 1-diphosphate to orotate, leading to the formation of orotidine monophosphate (OMP). In Bacillus caldolyticus, this protein is Orotate phosphoribosyltransferase.